The primary structure comprises 221 residues: Interleukin-12 subunit alpha (221 aa).

The first 25 residues, 1 to 25 (MCPLRSLLLISTLVLLHHLPHLSLG), serve as a signal peptide directing secretion. 3 disulfide bridges follow: Cys39/Cys112, Cys66/Cys198, and Cys87/Cys125. Asn95 carries N-linked (GlcNAc...) asparagine glycosylation.

Belongs to the IL-6 superfamily. As to quaternary structure, heterodimer with IL12B; disulfide-linked. This heterodimer is known as interleukin IL-12. Heterodimer with EBI3/IL27B; not disulfide-linked. This heterodimer is known as interleukin IL-35. Interacts with NBR1; this interaction promotes IL-12 secretion.

Its subcellular location is the secreted. Heterodimerizes with IL12B to form the IL-12 cytokine or with EBI3/IL27B to form the IL-35 cytokine. IL-12 is primarily produced by professional antigen-presenting cells (APCs) such as B-cells and dendritic cells (DCs) as well as macrophages and granulocytes and regulates T-cell and natural killer-cell responses, induces the production of interferon-gamma (IFN-gamma), favors the differentiation of T-helper 1 (Th1) cells and is an important link between innate resistance and adaptive immunity. Mechanistically, exerts its biological effects through a receptor composed of IL12R1 and IL12R2 subunits. Binding to the receptor results in the rapid tyrosine phosphorylation of a number of cellular substrates including the JAK family kinases TYK2 and JAK2. In turn, recruited STAT4 gets phosphorylated and translocates to the nucleus where it regulates cytokine/growth factor responsive genes. As part of IL-35, plays essential roles in maintaining the immune homeostasis of the liver microenvironment and also functions as an immune-suppressive cytokine. Mediates biological events through unconventional receptors composed of IL12RB2 and gp130/IL6ST heterodimers or homodimers. Signaling requires the transcription factors STAT1 and STAT4, which form a unique heterodimer that binds to distinct DNA sites. The polypeptide is Interleukin-12 subunit alpha (IL12A) (Ovis aries (Sheep)).